Reading from the N-terminus, the 227-residue chain is UPF0173 metal-dependent hydrolase YtkL (227 aa).

The protein belongs to the UPF0173 family.

This chain is UPF0173 metal-dependent hydrolase YtkL (ytkL), found in Bacillus subtilis (strain 168).